The primary structure comprises 238 residues: MSQSLIVALDFPGKQEVEQFLHHFEGEELFVKVGMELFYKEGPAIITYLKEKGHKIFLDLKLHDIPNTVKSAMRSLASLDVDMVNVHAAGGSSMMKAAIEGLEEGKQEGKERPICIAVTQLTSTSETMMKKEIGIEKTLEEAVAHYAKLTKESGLDGVVCSTLEVPKLREVCGNEFVTVTPGIRLASDDVNDQVRVATPKRARELGSSYIVVGRSITKAENPLEAYKTVKQQWEGVTV.

Substrate is bound by residues aspartate 10, lysine 32, 59–68 (DLKLHDIPNT), threonine 122, arginine 184, glutamine 193, glycine 213, and arginine 214. Residue lysine 61 is the Proton donor of the active site.

It belongs to the OMP decarboxylase family. Type 1 subfamily. Homodimer.

The enzyme catalyses orotidine 5'-phosphate + H(+) = UMP + CO2. It participates in pyrimidine metabolism; UMP biosynthesis via de novo pathway; UMP from orotate: step 2/2. In terms of biological role, catalyzes the decarboxylation of orotidine 5'-monophosphate (OMP) to uridine 5'-monophosphate (UMP). This is Orotidine 5'-phosphate decarboxylase from Bacillus mycoides (strain KBAB4) (Bacillus weihenstephanensis).